The primary structure comprises 451 residues: 2-succinylbenzoate--CoA ligase (451 aa).

This sequence belongs to the ATP-dependent AMP-binding enzyme family. MenE subfamily.

The enzyme catalyses 2-succinylbenzoate + ATP + CoA = 2-succinylbenzoyl-CoA + AMP + diphosphate. It participates in quinol/quinone metabolism; 1,4-dihydroxy-2-naphthoate biosynthesis; 1,4-dihydroxy-2-naphthoate from chorismate: step 5/7. The protein operates within quinol/quinone metabolism; menaquinone biosynthesis. Its function is as follows. Converts 2-succinylbenzoate (OSB) to 2-succinylbenzoyl-CoA (OSB-CoA). In Lactococcus lactis subsp. lactis (strain IL1403) (Streptococcus lactis), this protein is 2-succinylbenzoate--CoA ligase.